Here is a 1047-residue protein sequence, read N- to C-terminus: FACT complex subunit SPT16 (1047 aa).

At A2 the chain carries N-acetylalanine. N6-acetyllysine is present on K139. A Phosphoserine modification is found at S188. K196 and K223 each carry N6-acetyllysine. Residue S455 is modified to Phosphoserine. The stretch at 465 to 507 forms a coiled coil; sequence RNEMTAEEKRRAHQKELAAQLNEEAKRRLTEQKGEQQIQKARK. The disordered stretch occupies residues 491-518; the sequence is RRLTEQKGEQQIQKARKSNVSYKNPSLM. K497 participates in a covalent cross-link: Glycyl lysine isopeptide (Lys-Gly) (interchain with G-Cter in SUMO2). Over residues 499 to 514 the composition is skewed to polar residues; it reads EQQIQKARKSNVSYKN. S508 carries the phosphoserine modification. N6-acetyllysine; alternate is present on K513. A Glycyl lysine isopeptide (Lys-Gly) (interchain with G-Cter in SUMO2); alternate cross-link involves residue K513. A Glycyl lysine isopeptide (Lys-Gly) (interchain with G-Cter in SUMO2) cross-link involves residue K647. Phosphoserine occurs at positions 650 and 658. N6-acetyllysine occurs at positions 732 and 786. A Phosphothreonine modification is found at T903. K904 is modified (N6-acetyllysine). The interval 918 to 1047 is disordered; it reads EQGGWSFLEP…SSAPPKKKRK (130 aa). Over residues 927–973 the composition is skewed to acidic residues; sequence PEGEGSDAEDGDSESEIEDETFNPSEDDYEEEEEDSDEDYSSEAEES. S979, S982, S986, and S1015 each carry phosphoserine. A compositionally biased stretch (basic and acidic residues) spans 985-1005; the sequence is ESGKDWDELEEEARKADRESR. A compositionally biased stretch (low complexity) spans 1024-1039; that stretch reads VHSSGRGSNRGSRHSS.

Belongs to the peptidase M24 family. SPT16 subfamily. Interacts with MYOG (via C-terminal region). Component of the FACT complex, a stable heterodimer of SSRP1 and SUPT16H. Also a component of a CK2-SPT16-SSRP1 complex which forms following UV irradiation, composed of SSRP1, SUPT16H, CSNK2A1, CSNK2A2 and CSNK2B. Interacts with NEK9. Binds to histone H2A-H2B. Identified in a centromere complex containing histones H2A, H2B and H4, and at least CENPA, CENPB, CENPC, CENPT, CENPN, HJURP, SUPT16H, SSRP1 and RSF1. Interacts with GTF2E2. In terms of processing, ADP-ribosylated. ADP-ribosylation by PARP1 is induced by genotoxic stress and correlates with dissociation of FACT from chromatin. In terms of tissue distribution, widely expressed. Expressed in brain, liver, heart, kidneys, lungs, spleen, thymus, ovary, and testes, with highest levels of expression observed in thymus.

The protein resides in the nucleus. It localises to the chromosome. Functionally, component of the FACT complex, a general chromatin factor that acts to reorganize nucleosomes. The FACT complex is involved in multiple processes that require DNA as a template such as mRNA elongation, DNA replication and DNA repair. During transcription elongation the FACT complex acts as a histone chaperone that both destabilizes and restores nucleosomal structure. It facilitates the passage of RNA polymerase II and transcription by promoting the dissociation of one histone H2A-H2B dimer from the nucleosome, then subsequently promotes the reestablishment of the nucleosome following the passage of RNA polymerase II. The FACT complex is probably also involved in phosphorylation of 'Ser-392' of p53/TP53 via its association with CK2 (casein kinase II). The chain is FACT complex subunit SPT16 (Supt16h) from Mus musculus (Mouse).